Consider the following 286-residue polypeptide: Oxidoreductase clz15 (286 aa).

The protein belongs to the asaB hydroxylase/desaturase family.

It functions in the pathway secondary metabolite biosynthesis. Oxidoreductase; part of the gene cluster that mediates the biosynthesis of squalestatin S1 (SQS1, also known as zaragozic acid A), a heavily oxidized fungal polyketide that offers potent cholesterol lowering activity by targeting squalene synthase (SS). SQS1 is composed of a 2,8-dioxobicyclic[3.2.1]octane-3,4,5-tricarboxyclic acid core that is connected to two lipophilic polyketide arms. These initial steps feature the priming of an unusual benzoic acid starter unit onto the highly reducing polyketide synthase clz14, followed by oxaloacetate extension and product release to generate a tricarboxylic acid containing product. The phenylalanine ammonia lyase (PAL) clz10 and the acyl-CoA ligase clz12 are involved in transforming phenylalanine into benzoyl-CoA. The citrate synthase-like protein clz17 is involved in connecting the C-alpha-carbons of the hexaketide chain and oxaloacetate to afford the tricarboxylic acid unit. The potential hydrolytic enzymes, clz11 and clz13, are in close proximity to pks2 and may participate in product release. On the other side, the tetraketide arm is synthesized by a the squalestatin tetraketide synthase clz2 and enzymatically esterified to the core in the last biosynthetic step, by the acetyltransferase clz6. The biosynthesis of the tetraketide must involve 3 rounds of chain extension. After the first and second rounds methyl-transfer occurs, and in all rounds of extension the ketoreductase and dehydratase are active. The enoyl reductase and C-MeT of clz2 are not active in the final round of extension. The acetyltransferase clz6 appears to have a broad substrate selectivity for its acyl CoA substrate, allowing the in vitro synthesis of novel squalestatins. The biosynthesis of SQS1 requires several oxidative steps likely performed by oxidoreductases clz3, clz15 and clz16. Finally, in support of the identification of the cluster as being responsible for SQS1 production, the cluster contains a gene encoding a putative squalene synthase (SS) clz20, suggesting a likely mechanism for self-resistance. The protein is Oxidoreductase clz15 of Cochliobolus lunatus (Filamentous fungus).